Reading from the N-terminus, the 548-residue chain is Chaperonin GroEL (548 aa).

ATP-binding positions include 30 to 33 (TLGP), Lys51, 87 to 91 (DGTTT), Gly415, 479 to 481 (NAA), and Asp495.

It belongs to the chaperonin (HSP60) family. In terms of assembly, forms a cylinder of 14 subunits composed of two heptameric rings stacked back-to-back. Interacts with the co-chaperonin GroES.

The protein localises to the cytoplasm. The catalysed reaction is ATP + H2O + a folded polypeptide = ADP + phosphate + an unfolded polypeptide.. Functionally, together with its co-chaperonin GroES, plays an essential role in assisting protein folding. The GroEL-GroES system forms a nano-cage that allows encapsulation of the non-native substrate proteins and provides a physical environment optimized to promote and accelerate protein folding. The sequence is that of Chaperonin GroEL from Ectopseudomonas mendocina (strain ymp) (Pseudomonas mendocina).